Here is a 253-residue protein sequence, read N- to C-terminus: 5-oxoprolinase subunit A (253 aa).

This sequence belongs to the LamB/PxpA family. Forms a complex composed of PxpA, PxpB and PxpC.

The enzyme catalyses 5-oxo-L-proline + ATP + 2 H2O = L-glutamate + ADP + phosphate + H(+). In terms of biological role, catalyzes the cleavage of 5-oxoproline to form L-glutamate coupled to the hydrolysis of ATP to ADP and inorganic phosphate. This Bacillus cereus (strain ZK / E33L) protein is 5-oxoprolinase subunit A.